The chain runs to 180 residues: MATPVKVVEILSAEDLRRTLTRLASQIVERTRDLSQLVLLGIYTRGVPLAELLARQIETLEGINVGVGALDITFYRDDLDQIGLRTPAKTSITLDLTGKTVVLVDDVIFKGRTIRAALNAVNEYGRPEVIRLAVLVDRGHREVPIHPDFVGKQLPTAKEEVVKVYLQDWDGRDAVELVGY.

The PRPP-binding motif lies at 101 to 113 (VVLVDDVIFKGRT).

It belongs to the purine/pyrimidine phosphoribosyltransferase family. PyrR subfamily.

It catalyses the reaction UMP + diphosphate = 5-phospho-alpha-D-ribose 1-diphosphate + uracil. Its function is as follows. Regulates the transcription of the pyrimidine nucleotide (pyr) operon in response to exogenous pyrimidines. Also displays a weak uracil phosphoribosyltransferase activity which is not physiologically significant. The chain is Bifunctional protein PyrR from Trichormus variabilis (strain ATCC 29413 / PCC 7937) (Anabaena variabilis).